The chain runs to 380 residues: MTEEVIVIAKWDYTAQQDQELDIKKNERLWLLDDSKTWWRVRNAANRTGYVPSNYVERKNSLKKGSLVKNLKDTLGLGKTRRKTSARDASPTPSTDAEYPANGSGADRIYDLNIPAFVKFAYVAEREDELSLVKGSRVTVMEKCSDGWWRGSYNGQIGWFPSNYVLEEVDEAAAESPSFLSLRKGASLSNGQGSRVLHVVQTLYPFSSVTEEELNFEKGETMEVIEKPENDPEWWKCKNARGQVGLVPKNYVVVLSDGPALHPAHAPQISYTGPSSSGRFAGREWYYGNVTRHQAECALNERGVEGDFLIRDSESSPSDFSVSLKASGKNKHFKVQLVDNVYCIGQRRFHTMDELVEHYKKAPIFTSEHGEKLYLVRALQ.

An N-acetylthreonine modification is found at threonine 2. Residues 2 to 61 (TEEVIVIAKWDYTAQQDQELDIKKNERLWLLDDSKTWWRVRNAANRTGYVPSNYVERKNS) form the SH3 1 domain. The segment at 79-102 (KTRRKTSARDASPTPSTDAEYPAN) is disordered. Serine 90 bears the Phosphoserine mark. Threonine 92 carries the post-translational modification Phosphothreonine. The residue at position 94 (serine 94) is a Phosphoserine. A Phosphotyrosine modification is found at tyrosine 110. SH3 domains are found at residues 111–170 (DLNI…EEVD) and 195–257 (RVLH…VLSD). Residues 285 to 380 (WYYGNVTRHQ…EKLYLVRALQ (96 aa)) enclose the SH2 domain.

In terms of assembly, interacts with DOCK1, LIMS1 and TGFB1I1. Part of a complex containing PPP1R15B, PP1 and NCK2. Interacts with FASLG. Interacts with AXL. Interacts with PAK1, PKN2 and SOS1. Interacts (via SH2 domain) with EGFR. Interacts (via SH2 domain) with DDR1. Interacts with IRS1. Phosphorylated. As to expression, ubiquitous.

The protein resides in the cytoplasm. It is found in the endoplasmic reticulum. Functionally, adapter protein which associates with tyrosine-phosphorylated growth factor receptors or their cellular substrates. Maintains low levels of EIF2S1 phosphorylation by promoting its dephosphorylation by PP1. Plays a role in ELK1-dependent transcriptional activation in response to activated Ras signaling. This is Cytoplasmic protein NCK2 (NCK2) from Homo sapiens (Human).